We begin with the raw amino-acid sequence, 193 residues long: Transcriptional repressor NrdR (193 aa).

A zinc finger spans residues 3–34 (CPYCGGLDTQVKDSRPSEDASAIRRRRICPDC). Residues 49 to 139 (LTVVKRSGRK…VYKNFREAKD (91 aa)) enclose the ATP-cone domain. The tract at residues 150-193 (DQQDGAVPQAEADRPIGAGPPSEAAQPAAGEGGDAPMRRARSRA) is disordered.

The protein belongs to the NrdR family. Zn(2+) is required as a cofactor.

Negatively regulates transcription of bacterial ribonucleotide reductase nrd genes and operons by binding to NrdR-boxes. The protein is Transcriptional repressor NrdR of Methylobacterium nodulans (strain LMG 21967 / CNCM I-2342 / ORS 2060).